A 317-amino-acid chain; its full sequence is uncharacterized protein (317 aa).

One can recognise an HTH lysR-type domain in the interval 29 to 86; sequence IDLNLLTIFEAVYVHKGIVNAAKVLNLTPSAISQSIQKLRVIFPDPLFIRKGQGVTPT. Residues 46–65 constitute a DNA-binding region (H-T-H motif); it reads IVNAAKVLNLTPSAISQSIQ.

It belongs to the LysR transcriptional regulatory family.

This is an uncharacterized protein from Escherichia coli (strain K12).